Here is a 193-residue protein sequence, read N- to C-terminus: UPF0314 protein Pden_1914 (193 aa).

4 consecutive transmembrane segments (helical) span residues 13-33, 62-82, 148-168, and 172-192; these read APYWATFLVIVLAALWLLWIG, WYTPSHVIHGLVFYAALWLVA, LPVWASVAIVIGFEALTTWLI, and LALNVLMLLWPLEAVRGWQAA.

It belongs to the UPF0314 family.

The protein resides in the cell membrane. The polypeptide is UPF0314 protein Pden_1914 (Paracoccus denitrificans (strain Pd 1222)).